A 357-amino-acid chain; its full sequence is F-box only protein 25 (357 aa).

Positions Met1–Glu83 are interaction with beta-actin. Residues Leu225–Gln273 form the F-box domain.

Part of a SCF (SKP1-cullin-F-box) protein ligase complex consisting of FBXO25, SKP1, CUL1 and RBX1. Interacts directly with SKP1 and CUL1. Interacts (via C-terminus) with beta-actin (via N-terminus). Expressed in all tissues tested, except striated muscle (at protein level). Expressed predominantly in the cerebral cortex, the hippocampus and the Purkinje cell layer of the brain. Intestine and kidney show also significant levels.

The protein resides in the nucleus. It functions in the pathway protein modification; protein ubiquitination. Substrate-recognition component of the SCF (SKP1-CUL1-F-box protein)-type E3 ubiquitin ligase complex. May play a role in accumulation of expanded polyglutamine (polyQ) protein huntingtin (HTT). In Mus musculus (Mouse), this protein is F-box only protein 25 (Fbxo25).